A 425-amino-acid polypeptide reads, in one-letter code: MIDINLIREKPDYVKERLATRDKELVSLVDKVLELDKRRREIIKRLEALRSERNKLSKEIGKLKREGKDTTEIQNRVKELKEEIDRLEEELRKVEEELKNTLLWIPNLPHPSVPVGEDEKDNVEVRRWGEPRKFDFEPKPHWEIGERLGILDFKRGAKLSGSRFTVIAGWGARLERALINFMLDLHTKKGYKEICPPHLVKPEILIGTGQLPKFEEDLYKCERDNLYLIPTAEVPLTNLYREEILKEENLPIYLTAYTPCYRREAGAYGKDIRGIIRQHQFDKVELVKIVHPDTSYDELEKLVKDAEEVLQLLGLPYRVVELCTGDLGFSAAKTYDIEVWFPSQNKYREISSCSNCEDFQARRMNTRFKDSKTGKNRFVHTLNGSGLAVGRTLAAILENYQQEDGSVVVPEVLRDYVGTDVIRPE.

Residue 231-233 (TAE) coordinates L-serine. An ATP-binding site is contributed by 262–264 (RRE). E285 is a binding site for L-serine. 349-352 (EISS) serves as a coordination point for ATP. S385 lines the L-serine pocket.

This sequence belongs to the class-II aminoacyl-tRNA synthetase family. Type-1 seryl-tRNA synthetase subfamily. In terms of assembly, homodimer. The tRNA molecule binds across the dimer.

Its subcellular location is the cytoplasm. It carries out the reaction tRNA(Ser) + L-serine + ATP = L-seryl-tRNA(Ser) + AMP + diphosphate + H(+). It catalyses the reaction tRNA(Sec) + L-serine + ATP = L-seryl-tRNA(Sec) + AMP + diphosphate + H(+). Its pathway is aminoacyl-tRNA biosynthesis; selenocysteinyl-tRNA(Sec) biosynthesis; L-seryl-tRNA(Sec) from L-serine and tRNA(Sec): step 1/1. Functionally, catalyzes the attachment of serine to tRNA(Ser). Is also able to aminoacylate tRNA(Sec) with serine, to form the misacylated tRNA L-seryl-tRNA(Sec), which will be further converted into selenocysteinyl-tRNA(Sec). The chain is Serine--tRNA ligase from Aquifex aeolicus (strain VF5).